Consider the following 622-residue polypeptide: Chaperone protein HscA homolog (622 aa).

It belongs to the heat shock protein 70 family.

Chaperone involved in the maturation of iron-sulfur cluster-containing proteins. Has a low intrinsic ATPase activity which is markedly stimulated by HscB. The sequence is that of Chaperone protein HscA homolog from Burkholderia multivorans (strain ATCC 17616 / 249).